We begin with the raw amino-acid sequence, 222 residues long: MAHLVKMENGQSQTIQEMLGCIERYNPDHLKILESYVQDQAKNNTYDLEANLAVLKLYQFNPHMLNFDITYTILLKCLTNLPHTDFVMAKCLLLPQQMKDENVQTIIDLADILERADFTLFWQRAEVNRTMFRHITGFHDSIRKFVSHVVGTTFQTIKKDLLKELLGGIEDSTLENWIKRNGWKHQGHDLVVVATQDDKIKTKNITEKIEFENVGALMAQCI.

Residues 46 to 208 form the PCI domain; the sequence is YDLEANLAVL…KIKTKNITEK (163 aa).

The protein belongs to the eIF-3 subunit K family. Component of the eukaryotic translation initiation factor 3 (eIF-3) complex. The eIF-3 complex interacts with pix.

Its subcellular location is the cytoplasm. In terms of biological role, component of the eukaryotic translation initiation factor 3 (eIF-3) complex, which is involved in protein synthesis of a specialized repertoire of mRNAs and, together with other initiation factors, stimulates binding of mRNA and methionyl-tRNAi to the 40S ribosome. The eIF-3 complex specifically targets and initiates translation of a subset of mRNAs involved in cell proliferation. In Drosophila virilis (Fruit fly), this protein is Eukaryotic translation initiation factor 3 subunit K.